The primary structure comprises 619 residues: DEAD-box ATP-dependent RNA helicase 14 (619 aa).

Alanine 2 carries the post-translational modification N-acetylalanine. One can recognise a WW domain in the interval 17–51 (HTLPKPWKGLIDDRTGYLYFWNPETNVTQYEKPTP). Residues 47–139 (EKPTPSLPPK…APASELSPEA (93 aa)) are disordered. Positions 61–71 (VSVSSSVQVQQ) are enriched in low complexity. Basic and acidic residues predominate over residues 78-93 (PKDDDKYSRGSERVSR). A compositionally biased stretch (low complexity) spans 125–139 (PLPSSAPASELSPEA). The residue at position 136 (serine 136) is a Phosphoserine. The Q motif signature appears at 158–186 (MSFEATGFPPELLREVLSAGFSAPTPIQA). Residues 189-363 (WPIAMQGRDI…ADLLVNPAQV (175 aa)) form the Helicase ATP-binding domain. 202–209 (AKTGSGKT) lines the ATP pocket. The DEAD box signature appears at 311 to 314 (DEAD). A Helicase C-terminal domain is found at 392 to 536 (RLEQILRSQE…RVPPQIREMA (145 aa)). The disordered stretch occupies residues 528-619 (VPPQIREMAT…FHETMMMKHR (92 aa)). Positions 552-568 (PSGGRGRGGDSGYGGRG) are enriched in gly residues. Basic and acidic residues-rich tracts occupy residues 582–595 (GRERERSRSPERFN) and 609–619 (SFHETMMMKHR).

Belongs to the DEAD box helicase family. DDX5/DBP2 subfamily. Ubiquitous. Preferentially expressed in flowers and roots.

The protein resides in the nucleus. The catalysed reaction is ATP + H2O = ADP + phosphate + H(+). ATP-dependent RNA helicase involved nonsense-mediated mRNA decay and ribosome biogenesis through rRNA processing. This Arabidopsis thaliana (Mouse-ear cress) protein is DEAD-box ATP-dependent RNA helicase 14 (RH14).